Consider the following 169-residue polypeptide: E1B protein, small T-antigen (169 aa).

It belongs to the adenoviridae E1B 19 kDa protein family.

This Canine adenovirus serotype 1 (strain CLL) (CAdV-1) protein is E1B protein, small T-antigen.